Here is a 282-residue protein sequence, read N- to C-terminus: Putative 4-diphosphocytidyl-2-C-methyl-D-erythritol kinase (282 aa).

The active site involves K9. 93–103 (PVSAGLAGGSA) is an ATP binding site. The active site involves D135.

The protein belongs to the GHMP kinase family. IspE subfamily.

It catalyses the reaction 4-CDP-2-C-methyl-D-erythritol + ATP = 4-CDP-2-C-methyl-D-erythritol 2-phosphate + ADP + H(+). Catalyzes the phosphorylation of the position 2 hydroxy group of 4-diphosphocytidyl-2C-methyl-D-erythritol. The polypeptide is Putative 4-diphosphocytidyl-2-C-methyl-D-erythritol kinase (Staphylococcus haemolyticus (strain JCSC1435)).